A 310-amino-acid polypeptide reads, in one-letter code: Protein translocase subunit SecF (310 aa).

6 consecutive transmembrane segments (helical) span residues 18 to 38 (FFTI…YRGG), 135 to 155 (QAVY…AFRF), 162 to 182 (IVSV…VILA), 188 to 208 (ITIV…TIVL), 240 to 260 (IVTS…GGEV), and 267 to 287 (IMII…APLI).

It belongs to the SecD/SecF family. SecF subfamily. Forms a complex with SecD. Part of the essential Sec protein translocation apparatus which comprises SecA, SecYEG and auxiliary proteins SecDF. Other proteins may also be involved.

The protein localises to the cell inner membrane. Functionally, part of the Sec protein translocase complex. Interacts with the SecYEG preprotein conducting channel. SecDF uses the proton motive force (PMF) to complete protein translocation after the ATP-dependent function of SecA. The protein is Protein translocase subunit SecF of Endomicrobium trichonymphae.